Consider the following 100-residue polypeptide: EKC/KEOPS complex subunit GON7 (100 aa).

Residue Met-1 is modified to N-acetylmethionine. Residues 50–100 (SPVQGEAQDRVAAAPEEALDGDDEDDAEDENNIDNRTNSDGPTAKRPKPPS) form a disordered region. Over residues 66–81 (EALDGDDEDDAEDENN) the composition is skewed to acidic residues.

In terms of assembly, component of the EKC/KEOPS complex composed of at least GON7, TP53RK, TPRKB, OSGEP and LAGE3; the whole complex dimerizes.

Its subcellular location is the nucleus. In terms of biological role, component of the EKC/KEOPS complex that is required for the formation of a threonylcarbamoyl group on adenosine at position 37 (t(6)A37) in tRNAs that read codons beginning with adenine. The complex is probably involved in the transfer of the threonylcarbamoyl moiety of threonylcarbamoyl-AMP (TC-AMP) to the N6 group of A37. GON7 plays a supporting role to the catalytic subunit OSGEP in the complex. This chain is EKC/KEOPS complex subunit GON7, found in Sus scrofa (Pig).